Consider the following 689-residue polypeptide: Glycine--tRNA ligase beta subunit (689 aa).

This sequence belongs to the class-II aminoacyl-tRNA synthetase family. In terms of assembly, tetramer of two alpha and two beta subunits.

It localises to the cytoplasm. It catalyses the reaction tRNA(Gly) + glycine + ATP = glycyl-tRNA(Gly) + AMP + diphosphate. This Dictyoglomus thermophilum (strain ATCC 35947 / DSM 3960 / H-6-12) protein is Glycine--tRNA ligase beta subunit.